The sequence spans 197 residues: Potassium-transporting ATPase KdpC subunit (197 aa).

A helical membrane pass occupies residues 7–27 (PALVSMGLFTVLLGLAYPLAV).

This sequence belongs to the KdpC family. The system is composed of three essential subunits: KdpA, KdpB and KdpC.

The protein resides in the cell inner membrane. Functionally, part of the high-affinity ATP-driven potassium transport (or Kdp) system, which catalyzes the hydrolysis of ATP coupled with the electrogenic transport of potassium into the cytoplasm. This subunit acts as a catalytic chaperone that increases the ATP-binding affinity of the ATP-hydrolyzing subunit KdpB by the formation of a transient KdpB/KdpC/ATP ternary complex. The protein is Potassium-transporting ATPase KdpC subunit of Caulobacter vibrioides (strain ATCC 19089 / CIP 103742 / CB 15) (Caulobacter crescentus).